A 667-amino-acid polypeptide reads, in one-letter code: E3 ubiquitin-protein ligase RNF6 (667 aa).

7 disordered regions span residues 1–25 (MDPSRSRSGGSGEESSFQENERRWQ), 75–100 (KEQLASQPGSDSAASDGDSESLRAHS), 116–216 (GNVT…QGSF), 295–355 (FSSR…TPLS), 396–419 (ETRDRDSIANRTRSRAGLAESTVE), 507–532 (GDAADDSGQHGRASSQASQAQDGAEM), and 537–556 (EPAPPQARPSGSRSRRQLGR). A compositionally biased stretch (low complexity) spans 79 to 90 (ASQPGSDSAASD). The segment covering 116–139 (GNVTRSGQNGNQSWRAVSRTNPNS) has biased composition (polar residues). Residues 150 to 163 (INPDNRGSEMHGED) show a composition bias toward basic and acidic residues. Over residues 191–200 (SQTSMSSSGP) the composition is skewed to low complexity. Over residues 296-327 (SSRSRSPIQRQNGTVHHNSQRQGRPVQQTGRN) the composition is skewed to polar residues. Low complexity predominate over residues 516-530 (HGRASSQASQAQDGA). S559 bears the Phosphoserine mark. An RING-type; atypical zinc finger spans residues 614-655 (CSVCISDYVAGNKLRQLPCLHEFHIHCIDRWLSENCTCPVCR).

This sequence belongs to the RNF12 family. As to expression, widely expressed with higher expression in the testis in both germ cells and Sertoli cells.

It is found in the nucleus. The protein localises to the cytoplasm. Its subcellular location is the cell projection. The protein resides in the axon. It localises to the PML body. It carries out the reaction S-ubiquitinyl-[E2 ubiquitin-conjugating enzyme]-L-cysteine + [acceptor protein]-L-lysine = [E2 ubiquitin-conjugating enzyme]-L-cysteine + N(6)-ubiquitinyl-[acceptor protein]-L-lysine.. It functions in the pathway protein modification; protein ubiquitination. In terms of biological role, E3 ubiquitin-protein ligase mediating 'Lys-48'-linked polyubiquitination of LIMK1 and its subsequent targeting to the proteasome for degradation. Negatively regulates axonal outgrowth through regulation of the LIMK1 turnover. Mediates 'Lys-6' and 'Lys-27'-linked polyubiquitination of AR/androgen receptor thereby modulating its transcriptional activity. May also bind DNA and function as a transcriptional regulator. Mediates polyubiquitination of QKI in macrophages, leading to its degradation. The polypeptide is E3 ubiquitin-protein ligase RNF6 (Mus musculus (Mouse)).